The sequence spans 916 residues: Protein O-GlcNAcase (916 aa).

The disordered stretch occupies residues 1 to 46 (MVQKESQAALEERESERNANPAAASGASLEQSVAPAPGEDNPSGAG). The GH84 domain maps to 60 to 336 (FLCGVVEGFY…TLATWYKSNM (277 aa)). Positions 67, 98, and 174 each coordinate a protein. D175 (proton donor) is an active-site residue. Residues Y219, 278–280 (WDN), D285, and N313 each bind a protein. S364 carries the phosphoserine modification. The segment at 443–465 (ALSGEPSVLTKEEEKKQPDEEPM) is disordered. Basic and acidic residues predominate over residues 452 to 461 (TKEEEKKQPD).

Belongs to the glycosyl hydrolase 84 family. As to quaternary structure, monomer. Interacts with CLOCK. Proteolytically cleaved by caspase-3 during apoptosis. The fragments interact with each other; cleavage does not decrease enzyme activity.

Its subcellular location is the cytoplasm. It is found in the nucleus. It carries out the reaction 3-O-(N-acetyl-beta-D-glucosaminyl)-L-seryl-[protein] + H2O = N-acetyl-D-glucosamine + L-seryl-[protein]. The catalysed reaction is 3-O-(N-acetyl-beta-D-glucosaminyl)-L-threonyl-[protein] + H2O = L-threonyl-[protein] + N-acetyl-D-glucosamine. In terms of biological role, cleaves GlcNAc but not GalNAc from O-glycosylated proteins. Deglycosylates a large and diverse number of proteins, such as CRYAB, ELK1, GSDMD, LMNB1 and TAB1. Can use p-nitrophenyl-beta-GlcNAc and 4-methylumbelliferone-GlcNAc as substrates but not p-nitrophenyl-beta-GalNAc or p-nitrophenyl-alpha-GlcNAc (in vitro). Does not bind acetyl-CoA and does not have histone acetyltransferase activity. The polypeptide is Protein O-GlcNAcase (Mus musculus (Mouse)).